The sequence spans 516 residues: Serine carboxypeptidase II-3 (516 aa).

Residues methionine 1 to glycine 20 form the signal peptide. A propeptide spanning residues alanine 21–glutamate 77 is cleaved from the precursor. Intrachain disulfides connect cysteine 143/cysteine 391, cysteine 300/cysteine 315, and cysteine 339/cysteine 359. Residues asparagine 194 and asparagine 205 are each glycosylated (N-linked (GlcNAc...) asparagine). Residue serine 236 is part of the active site. Asparagine 301 is a glycosylation site (N-linked (GlcNAc...) asparagine). The propeptide at glutamate 342–serine 352 is linker peptide. N-linked (GlcNAc...) asparagine glycosylation occurs at asparagine 380. Residues aspartate 427 and histidine 484 contribute to the active site.

It belongs to the peptidase S10 family. As to quaternary structure, carboxypeptidase II is a dimer, where each monomer is composed of two chains linked by a disulfide bond. Post-translationally, the linker peptide is endoproteolytically excised during enzyme maturation.

It carries out the reaction Preferential release of a C-terminal arginine or lysine residue.. This chain is Serine carboxypeptidase II-3 (CXP;2-3), found in Hordeum vulgare (Barley).